A 242-amino-acid polypeptide reads, in one-letter code: Small ribosomal subunit protein eS6 (242 aa).

A compositionally biased stretch (basic and acidic residues) spans 219-229 (EKKSEKAEEKK). The segment at 219-242 (EKKSEKAEEKKRRASSLRTQSVQA) is disordered. A phosphoserine mark is found at Ser-233 and Ser-234.

The protein belongs to the eukaryotic ribosomal protein eS6 family. Phosphorylated.

The chain is Small ribosomal subunit protein eS6 (RPS6) from Yarrowia lipolytica (strain CLIB 122 / E 150) (Yeast).